Reading from the N-terminus, the 128-residue chain is D-ribose pyranase (128 aa).

Catalysis depends on histidine 20, which acts as the Proton donor. Residues aspartate 28, histidine 95, and 117-119 contribute to the substrate site; that span reads YSN.

It belongs to the RbsD / FucU family. RbsD subfamily. Homodecamer.

Its subcellular location is the cytoplasm. It carries out the reaction beta-D-ribopyranose = beta-D-ribofuranose. Its pathway is carbohydrate metabolism; D-ribose degradation; D-ribose 5-phosphate from beta-D-ribopyranose: step 1/2. In terms of biological role, catalyzes the interconversion of beta-pyran and beta-furan forms of D-ribose. This chain is D-ribose pyranase, found in Thermosipho africanus (strain TCF52B).